A 155-amino-acid polypeptide reads, in one-letter code: Ribonuclease H (155 aa).

One can recognise an RNase H type-1 domain in the interval 1–142 (MLKQVEIFTD…CDELARAAAS (142 aa)). The Mg(2+) site is built by Asp-10, Glu-48, Asp-70, and Asp-134.

The protein belongs to the RNase H family. Monomer. The cofactor is Mg(2+).

The protein localises to the cytoplasm. It catalyses the reaction Endonucleolytic cleavage to 5'-phosphomonoester.. Functionally, endonuclease that specifically degrades the RNA of RNA-DNA hybrids. The chain is Ribonuclease H from Klebsiella pneumoniae (strain 342).